The primary structure comprises 221 residues: MFQRFTSLFFNTPAPPEDSNCPGAFVSEEDEVDGWLIIDLQDSYTAPPDPGASPAPAGRPPPAPSLMDESWFVTPPACFTAEGPGLGPARLQSNPLEDLLIEHPSMSVYVTGSTIVLESGPPSPHPEAALPDQDLSDGELAPALREPRALHHAAAPMPARAVLLEKAGQVRRLQRARQRAERHTLSAKVLQRQNRARESRSRRPKHQGSFIYQPCQRQFNY.

The short motif at 26-41 is the LIR element; it reads VSEEDEVDGWLIIDLQ. A disordered region spans residues 41–68; it reads QDSYTAPPDPGASPAPAGRPPPAPSLMD. Positions 47–64 are enriched in pro residues; that stretch reads PPDPGASPAPAGRPPPAP. Ser136 bears the Phosphoserine mark. Residues 177–210 are disordered; it reads RQRAERHTLSAKVLQRQNRARESRSRRPKHQGSF.

In terms of assembly, interacts with VMP1, GABARAP, GABARAPL1, GABARAPL2, MAP1LC3A, MAP1LC3B, MAP1LC3C and THRA.

Its subcellular location is the cytoplasm. It is found in the cytosol. It localises to the nucleus. The protein localises to the PML body. The protein resides in the cytoplasmic vesicle. Its subcellular location is the autophagosome. Dual regulator of transcription and autophagy. Positively regulates autophagy and is required for autophagosome formation and processing. May act as a scaffold protein that recruits MAP1LC3A, GABARAP and GABARAPL2 and brings them to the autophagosome membrane by interacting with VMP1 where, in cooperation with the BECN1-PI3-kinase class III complex, they trigger autophagosome development. Acts as a transcriptional activator of THRA. The chain is Tumor protein p53-inducible nuclear protein 2 (Tp53inp2) from Mus musculus (Mouse).